The following is a 445-amino-acid chain: MKVKVLCRNPDDYVRETKRDLQRVPRNYDPALHPFEVPREYTRALNATKLERVFAKPFIASLDGHRDGVNCIAKHPKSLSTVLSGACDGEVKIWNLTKRECSRTIQAHDGFVRGLCVRFCGTSFFTVGDDKTVKQWSMESPGYGEKVEPIRTILGKTVFTGIDHHMNDAIFATCGQQVDIWDEQRSAPMRSYAWGVDSISSIKFNPIETHILSSCGTDRSIVLYDKRKPTPLKKIILEMRTNTLCWNPMEAFIFTAANENFNLYTYDMRYMDGPVKVHMDHVSAVLDVDYSPTGKEFVSASFDKSIRIFPVQSGHSREVYHTKRMQHVTCVRWSADNKYVLCGSDEMNIRIWKANASEKLGLLSPRERAAQNYNQKLKEKFHHHPQIKRIARHRHLPRSIYSQIKEQQIMREARRKKDVNRRKHSKPGSVPIPSEKKKHVLAVVE.

7 WD repeats span residues 64–104, 107–146, 154–191, 194–234, 236–276, 280–319, and 323–362; these read GHRD…CSRT, AHDGFVRGLCVRFCGTSFFTVGDDKTVKQWSMESPGYGEK, LGKTVFTGIDHHMNDAIFATCGQQVDIWDEQRSAPMRS, WGVD…PLKK, ILEM…GPVK, DHVSAVLDVDYSPTGKEFVSASFDKSIRIFPVQSGHSREV, and KRMQHVTCVRWSADNKYVLCGSDEMNIRIWKANASEKLGL. The interval 353–441 is required for nucleolar location; it reads KANASEKLGL…IPSEKKKHVL (89 aa). 2 stretches are compositionally biased toward basic residues: residues 413–426 and 436–445; these read ARRKKDVNRRKHSK and KKKHVLAVVE. The interval 413–445 is disordered; it reads ARRKKDVNRRKHSKPGSVPIPSEKKKHVLAVVE.

This sequence belongs to the WD repeat DCAF13/WDSOF1 family. As to quaternary structure, part of the small subunit (SSU) processome, composed of more than 70 proteins and the RNA chaperone small nucleolar RNA (snoRNA) U3. Component of the DCX(DCAF13) E3 ubiquitin ligase complex, at least composed of CUL4 (CUL4A or CUL4B), DDB1, DCAF13 and RBX1.

The protein localises to the nucleus. It is found in the nucleolus. It participates in protein modification; protein ubiquitination. In terms of biological role, part of the small subunit (SSU) processome, first precursor of the small eukaryotic ribosomal subunit. During the assembly of the SSU processome in the nucleolus, many ribosome biogenesis factors, an RNA chaperone and ribosomal proteins associate with the nascent pre-rRNA and work in concert to generate RNA folding, modifications, rearrangements and cleavage as well as targeted degradation of pre-ribosomal RNA by the RNA exosome. Substrate-recognition component of a DCX (DDB1-CUL4-X-box) E3 ubiquitin-protein ligase complex. The protein is DDB1- and CUL4-associated factor 13 (dcaf13) of Xenopus tropicalis (Western clawed frog).